Reading from the N-terminus, the 1334-residue chain is Stress response protein NST1 (1334 aa).

The span at 1–14 (MPSHSKNKKRKSKS) shows a compositional bias: basic residues. Disordered stretches follow at residues 1-82 (MPSH…SSNN), 212-242 (QMIS…NESL), 530-565 (IISP…RNDL), 712-849 (AEES…AEQK), and 977-996 (AAIN…NSSV). Low complexity predominate over residues 15-25 (KGGSTVKKSGG). Residues 538 to 555 (GNDTEEDIDYYDDEDDVS) are compositionally biased toward acidic residues. Positions 694–876 (YHAKQAENNR…LEEEEKRLKS (183 aa)) form a coiled coil. A compositionally biased stretch (polar residues) spans 981–996 (DPTTPQTTLPYGNSSV).

The protein belongs to the NST1 family.

Its subcellular location is the cytoplasm. Its function is as follows. May act as a negative regulator of salt tolerance. The sequence is that of Stress response protein NST1 (NST1) from Vanderwaltozyma polyspora (strain ATCC 22028 / DSM 70294 / BCRC 21397 / CBS 2163 / NBRC 10782 / NRRL Y-8283 / UCD 57-17) (Kluyveromyces polysporus).